A 368-amino-acid chain; its full sequence is Ribulose bisphosphate carboxylase-like protein 1 (368 aa).

The protein belongs to the RuBisCO large chain family. Type IV subfamily.

Unknown. Probably does not have RuBisCO activity. In Rhodopseudomonas palustris (strain ATCC BAA-98 / CGA009), this protein is Ribulose bisphosphate carboxylase-like protein 1 (rlp1).